Here is a 473-residue protein sequence, read N- to C-terminus: Phenolic acid decarboxylase (473 aa).

Residues Asn-160, His-182, and Glu-224 each coordinate Mn(2+). Residues 160-165 (NVGIYR) and 181-182 (QH) each bind prenylated FMN. Glu-273 (proton donor) is an active-site residue.

Belongs to the UbiD family. YclC subfamily. Requires prenylated FMN as cofactor. The cofactor is Mn(2+).

It carries out the reaction 4-hydroxybenzoate + H(+) = phenol + CO2. It catalyses the reaction vanillate + H(+) = guaiacol + CO2. In terms of biological role, involved in the non-oxidative decarboxylation and detoxification of phenolic derivatives under both aerobic and anaerobic conditions. Phenolic acid decarboxylase that catalyzes the reversible decarboxylation of 4-hydroxybenzoate and vanillate. Could also catalyze the decarboxylation of salicylate. Is not active on di- and tri-hydroxybenzoate derivatives. The sequence is that of Phenolic acid decarboxylase from Bacillus subtilis (strain 168).